Here is a 475-residue protein sequence, read N- to C-terminus: Aspartyl/glutamyl-tRNA(Asn/Gln) amidotransferase subunit B (475 aa).

It belongs to the GatB/GatE family. GatB subfamily. As to quaternary structure, heterotrimer of A, B and C subunits.

It carries out the reaction L-glutamyl-tRNA(Gln) + L-glutamine + ATP + H2O = L-glutaminyl-tRNA(Gln) + L-glutamate + ADP + phosphate + H(+). The enzyme catalyses L-aspartyl-tRNA(Asn) + L-glutamine + ATP + H2O = L-asparaginyl-tRNA(Asn) + L-glutamate + ADP + phosphate + 2 H(+). Allows the formation of correctly charged Asn-tRNA(Asn) or Gln-tRNA(Gln) through the transamidation of misacylated Asp-tRNA(Asn) or Glu-tRNA(Gln) in organisms which lack either or both of asparaginyl-tRNA or glutaminyl-tRNA synthetases. The reaction takes place in the presence of glutamine and ATP through an activated phospho-Asp-tRNA(Asn) or phospho-Glu-tRNA(Gln). The protein is Aspartyl/glutamyl-tRNA(Asn/Gln) amidotransferase subunit B of Staphylococcus aureus (strain COL).